Reading from the N-terminus, the 203-residue chain is Phosphatidylglycerophosphatase B (203 aa).

Met-1 is a topological domain (cytoplasmic). A helical transmembrane segment spans residues 2–17 (YKPVSLFLFFLILAAA). At 18-55 (IHTNAVQSADEAISKAAVLIRQPWLNEVMTGITHLGAS) the chain is on the extracellular side. Residues 56 to 74 (SFLLPLIVIIGAGMFFYRK) traverse the membrane as a helical segment. Topologically, residues 75–78 (TWDG) are cytoplasmic. Residues 79-99 (LLMLLVFGTDRLLNKVLKEWI) form a helical membrane-spanning segment. A phosphatase sequence motif I region spans residues 96 to 104 (KEWIERVRP). At 100-119 (ERVRPDFAPLVHESSFSFPS) the chain is on the extracellular side. Residues 118 to 121 (PSGH) form a phosphatase sequence motif II region. Residues 120 to 139 (GHSMNAACVYPVIAYFLVKH) form a helical membrane-spanning segment. The active-site Proton donors is His-121. Over 140-146 (LPFLSKH) the chain is Cytoplasmic. Residues 147 to 167 (KKMVYIIAGVIAVLVGISRVY) form a helical membrane-spanning segment. The segment at 164 to 175 (SRVYLGVHFVTD) is phosphatase sequence motif III. Over 168–172 (LGVHF) the chain is Extracellular. His-171 acts as the Nucleophile in catalysis. A helical transmembrane segment spans residues 173-196 (VTDVLGGFSLGLLLFFLVKGFDEK). The Cytoplasmic portion of the chain corresponds to 197–203 (IKRFRQK).

It belongs to the PA-phosphatase related phosphoesterase family.

It localises to the cell membrane. It catalyses the reaction a 1,2-diacyl-sn-glycero-3-phospho-(1'-sn-glycero-3'-phosphate) + H2O = a 1,2-diacyl-sn-glycero-3-phospho-(1'-sn-glycerol) + phosphate. Its function is as follows. Catalyzes the dephosphorylation of phosphatidylglycerophosphate (PGP) to phosphatidylglycerol. Also has undecaprenyl pyrophosphate phosphatase activity, required for the biosynthesis of the lipid carrier undecaprenyl phosphate. The sequence is that of Phosphatidylglycerophosphatase B from Bacillus subtilis (strain 168).